We begin with the raw amino-acid sequence, 356 residues long: Protein-arginine kinase (356 aa).

Residues 24 to 256 (IIISSRVRVA…RQILAQEQAA (233 aa)) form the Phosphagen kinase C-terminal domain. Residues 27–31 (SSRVR), His93, Arg127, 178–182 (RASVM), and 209–214 (RGLYGE) contribute to the ATP site. The RDXXRA motif of the pArg binding pocket involved in allosteric regulation motif lies at 339–344 (RDIFRA).

This sequence belongs to the ATP:guanido phosphotransferase family.

The catalysed reaction is L-arginyl-[protein] + ATP = N(omega)-phospho-L-arginyl-[protein] + ADP + H(+). With respect to regulation, appears to be allosterically activated by the binding of pArg-containing polypeptides to the pArg-binding pocket localized in the C-terminal domain of McsB. Catalyzes the specific phosphorylation of arginine residues in proteins. The sequence is that of Protein-arginine kinase from Pelotomaculum thermopropionicum (strain DSM 13744 / JCM 10971 / SI).